The chain runs to 68 residues: Protein transport protein Sec61 subunit gamma (68 aa).

Position 1 is an N-acetylmethionine (M1). Topologically, residues 1–32 (MDQVMQFVEPSRQFVKDSIRLVKRCTKPDRKE) are cytoplasmic. S18 carries the post-translational modification Phosphoserine. Residues 33–61 (FQKIAMATAIGFAIMGFIGFFVKLIHIPI) form a helical membrane-spanning segment. Over 62–68 (NNIIVGG) the chain is Extracellular.

Belongs to the SecE/SEC61-gamma family. In terms of assembly, the SEC61 channel-forming translocon complex consists of channel-forming core components SEC61A1, SEC61B and SEC61G and different auxiliary components such as SEC62 and SEC63. The SEC61 channel associates with the multi-pass translocon (MPT) complex.

The protein localises to the endoplasmic reticulum membrane. In terms of biological role, component of SEC61 channel-forming translocon complex that mediates transport of signal peptide-containing precursor polypeptides across the endoplasmic reticulum (ER). Forms a ribosome receptor and a gated pore in the ER membrane, both functions required for cotranslational translocation of nascent polypeptides. The SEC61 channel is also involved in ER membrane insertion of transmembrane proteins: it mediates membrane insertion of the first few transmembrane segments of proteins, while insertion of subsequent transmembrane regions of multi-pass membrane proteins is mediated by the multi-pass translocon (MPT) complex. The SEC61 channel cooperates with the translocating protein TRAM1 to import nascent proteins into the ER. The polypeptide is Protein transport protein Sec61 subunit gamma (SEC61G) (Bos taurus (Bovine)).